A 432-amino-acid polypeptide reads, in one-letter code: Protein trichome birefringence-like 23 (432 aa).

A helical; Signal-anchor for type II membrane protein transmembrane segment spans residues 13–35 (QNTYLIKLVAATLITCLAFRFFV). Positions 153 to 155 (GDS) match the GDS motif motif. A DCXHWCLPGXXDXWN motif motif is present at residues 404–418 (DCLHWCLPGPIDHLN).

This sequence belongs to the PC-esterase family. TBL subfamily.

The protein resides in the membrane. In terms of biological role, may act as a bridging protein that binds pectin and other cell wall polysaccharides. Probably involved in maintaining esterification of pectins. May be involved in the specific O-acetylation of cell wall polymers. The sequence is that of Protein trichome birefringence-like 23 (TBL23) from Arabidopsis thaliana (Mouse-ear cress).